Reading from the N-terminus, the 89-residue chain is Small ribosomal subunit protein uS17 (89 aa).

The protein belongs to the universal ribosomal protein uS17 family. As to quaternary structure, part of the 30S ribosomal subunit.

Its function is as follows. One of the primary rRNA binding proteins, it binds specifically to the 5'-end of 16S ribosomal RNA. In Coxiella burnetii (strain RSA 493 / Nine Mile phase I), this protein is Small ribosomal subunit protein uS17.